Reading from the N-terminus, the 830-residue chain is DNA helicase MCM8 (830 aa).

An MCM domain is found at 392–599 (LLKLIVNSLC…QHDHLLSEHV (208 aa)). 444-451 (GDPGLGKS) lines the ATP pocket. Residue Ser-620 is modified to Phosphoserine.

Belongs to the MCM family. In terms of assembly, component of the MCM8-MCM9 complex, which forms a hexamer composed of MCM8 and MCM9. Interacts with the DNA mismatch repair (MMR) complex composed at least of MSH2, MSH3, MSH6, PMS1 and MLH1. Interacts with RAD51; the interaction recruits RAD51 to DNA damage sites. Interacts with the MRN complex composed of MRE11, RAD50 and NBN/NBS1. Interacts with CDC6 and ORC2. Interacts with HROB; the interaction recruits the MCM8-MCM9 complex to DNA damage sites.

The protein localises to the nucleus. It is found in the chromosome. The enzyme catalyses ATP + H2O = ADP + phosphate + H(+). Functionally, component of the MCM8-MCM9 complex, a complex involved in the repair of double-stranded DNA breaks (DBSs) and DNA interstrand cross-links (ICLs) by homologous recombination (HR). Required for DNA resection by the MRE11-RAD50-NBN/NBS1 (MRN) complex by recruiting the MRN complex to the repair site and by promoting the complex nuclease activity. Probably by regulating the localization of the MNR complex, indirectly regulates the recruitment of downstream effector RAD51 to DNA damage sites including DBSs and ICLs. The MCM8-MCM9 complex is dispensable for DNA replication and S phase progression. However, may play a non-essential for DNA replication: may be involved in the activation of the prereplicative complex (pre-RC) during G(1) phase by recruiting CDC6 to the origin recognition complex (ORC). Probably by regulating HR, plays a key role during gametogenesis. Stabilizes MCM9 protein. This chain is DNA helicase MCM8 (Mcm8), found in Rattus norvegicus (Rat).